The chain runs to 494 residues: NAD(+) hydrolase ThsA (494 aa).

Residues 11–295 form the Deacetylase sirtuin-type domain; the sequence is ATDKEVLIKE…TILQRYCRSK (285 aa). NAD(+)-binding residues include Ala-30, Asp-119, and His-157. His-157 acts as the Proton acceptor in catalysis. Residues 296 to 494 form an SLOG (STALD) domain, binds 3'cADPR region; sequence ILISGSAVEY…KIITALRAGR (199 aa). Gly-300, Ser-301, Leu-339, Phe-370, Arg-388, Lys-405, Gly-416, and Glu-420 together coordinate 3'cADPR.

This sequence belongs to the soluble Thoeris ThsA family. Homotetramer.

It localises to the cytoplasm. The catalysed reaction is NAD(+) + H2O = ADP-D-ribose + nicotinamide + H(+). Its activity is regulated as follows. Probably activated by a signal molecule generated by endogenous ThsB1 and/or ThsB2. Can also be activated by the signal generated by ThsB of B.cereus. The activating molecule might be 3' cyclic ADP-D-ribose (3'cADPR). In terms of biological role, probable NAD(+) hydrolyzing component (NADase) of the Thoeris antiviral defense system, composed of ThsA, TIR1 (thsB1) and TIR2 (thsB2). Activated by a signal molecule generated by endogenous TIR1, TIR2 or ThsB from B.cereus. After activation it binds and hydrolyzes NAD(+), leading to cell death and inhibition of phage replication. Expression of Thoeris in B.subtilis (strain BEST7003) confers resistance to phages phi29, phi3T, SPBeta, SBSphi11, SBSphi13, SBSphiJ, SPO1 and SPR but not SBSphiC. The TIR paralogs confer overlapping resistance to different phages. The chain is NAD(+) hydrolase ThsA from Cytobacillus dafuensis (Bacillus dafuensis).